We begin with the raw amino-acid sequence, 319 residues long: HPr kinase/phosphorylase (319 aa).

Active-site residues include H140 and K161. An ATP-binding site is contributed by 155-162 (GDSGVGKS). S162 provides a ligand contact to Mg(2+). D179 (proton acceptor; for phosphorylation activity. Proton donor; for dephosphorylation activity) is an active-site residue. An important for the catalytic mechanism of both phosphorylation and dephosphorylation region spans residues 203 to 212 (LEIRGLGIID). Residue E204 participates in Mg(2+) binding. R245 is an active-site residue. Residues 266–271 (PVKVGR) form an important for the catalytic mechanism of dephosphorylation region.

The protein belongs to the HPrK/P family. In terms of assembly, homohexamer, arranged as bilayered trimers. Six HPr molecules bind to the hexamer at sites that overlap two of its subunits. It depends on Mg(2+) as a cofactor.

It catalyses the reaction [HPr protein]-L-serine + ATP = [HPr protein]-O-phospho-L-serine + ADP + H(+). The catalysed reaction is [HPr protein]-O-phospho-L-serine + phosphate + H(+) = [HPr protein]-L-serine + diphosphate. With respect to regulation, kinase activity is slightly activated by fructose 1,6-bisphosphate (FBP), and inhibited by inorganic phosphate (Pi), but FBP prevents kinase inhibition by Pi. Dephosphorylation of P-Ser-HPr is slightly inhibited by FBP. Its function is as follows. Catalyzes the ATP- as well as the pyrophosphate-dependent phosphorylation of 'Ser-46' in HPr, a phosphocarrier protein of the phosphoenolpyruvate-dependent sugar phosphotransferase system (PTS). HprK/P also catalyzes the pyrophosphate-producing, inorganic phosphate-dependent dephosphorylation (phosphorolysis) of seryl-phosphorylated HPr (P-Ser-HPr). The two antagonistic activities of HprK/P are regulated by several intracellular metabolites, which change their concentration in response to the absence or presence of rapidly metabolisable carbon sources (glucose, fructose, etc.) in the growth medium. Therefore, by controlling the phosphorylation state of HPr, HPrK/P is a sensor enzyme that plays a major role in the regulation of carbon metabolism and sugar transport: it mediates carbon catabolite repression (CCR), and regulates PTS-catalyzed carbohydrate uptake and inducer exclusion. The protein is HPr kinase/phosphorylase (hprK) of Lacticaseibacillus casei (Lactobacillus casei).